A 393-amino-acid polypeptide reads, in one-letter code: Putative serpin-Z6A (393 aa).

An RCL region spans residues Gly-336–Arg-360.

This sequence belongs to the serpin family.

Functionally, probable serine protease inhibitor. The chain is Putative serpin-Z6A from Oryza sativa subsp. japonica (Rice).